Consider the following 317-residue polypeptide: MTPAPKSTFVLGHRHLLGIEGLSAADISGLLDLSEEYVELNRQVDKKRTSLRGRTQVNLFFEASTRTQSSFEIAGKRLGADVMNMSVSSSSMRKGETLMDTAVTLNAMHPDILVVRHHASGAVELLARKVDGSVINAGDGAHEHPTQALLDALTIRRNKGRLEGLVVAICGDVMHSRVARSNILLLNTMGARVRVVAPSTLLPAGIERMGVEVARDMREGLDGADIVMMLRLQRERMNGSFVPSSAEYFNYFGLDQKKLSYAKPDALVMHPGPMNRGVEIDSIVADGAQSVIREQVEMGVAVRMAVLEALARNLPNA.

Carbamoyl phosphate is bound by residues R66 and T67. K94 contributes to the L-aspartate binding site. 3 residues coordinate carbamoyl phosphate: R116, H144, and Q147. 2 residues coordinate L-aspartate: R177 and R231. Positions 272 and 273 each coordinate carbamoyl phosphate.

It belongs to the aspartate/ornithine carbamoyltransferase superfamily. ATCase family. As to quaternary structure, heterododecamer (2C3:3R2) of six catalytic PyrB chains organized as two trimers (C3), and six regulatory PyrI chains organized as three dimers (R2).

It carries out the reaction carbamoyl phosphate + L-aspartate = N-carbamoyl-L-aspartate + phosphate + H(+). It participates in pyrimidine metabolism; UMP biosynthesis via de novo pathway; (S)-dihydroorotate from bicarbonate: step 2/3. Functionally, catalyzes the condensation of carbamoyl phosphate and aspartate to form carbamoyl aspartate and inorganic phosphate, the committed step in the de novo pyrimidine nucleotide biosynthesis pathway. This chain is Aspartate carbamoyltransferase catalytic subunit, found in Rhodopseudomonas palustris (strain ATCC BAA-98 / CGA009).